The following is a 222-amino-acid chain: UPF0758 protein YicR (222 aa).

Residues 100–222 (PLLSPEMTRE…NVSFAERGWI (123 aa)) form the MPN domain. 3 residues coordinate Zn(2+): histidine 171, histidine 173, and aspartate 184. Positions 171-184 (HNHPSGCAEPSKAD) match the JAMM motif motif.

The protein belongs to the UPF0758 family. YicR subfamily.

This is UPF0758 protein YicR from Shigella boydii serotype 18 (strain CDC 3083-94 / BS512).